A 188-amino-acid chain; its full sequence is Gamma-glutamylcyclotransferase (188 aa).

19–24 contacts substrate; the sequence is YFAYGS. The active-site Proton acceptor is glutamate 98. Position 139 (tyrosine 139) interacts with substrate. Serine 173 is subject to Phosphoserine.

It belongs to the gamma-glutamylcyclotransferase family. Homodimer.

It catalyses the reaction an alpha-(gamma-L-glutamyl)-L-amino acid = 5-oxo-L-proline + an L-alpha-amino acid. Its function is as follows. Catalyzes the formation of 5-oxoproline from gamma-glutamyl dipeptides and may play a significant role in glutathione homeostasis. Induces release of cytochrome c from mitochondria with resultant induction of apoptosis. The polypeptide is Gamma-glutamylcyclotransferase (Homo sapiens (Human)).